Here is a 508-residue protein sequence, read N- to C-terminus: Photosystem II CP47 reaction center protein (508 aa).

The next 6 helical transmembrane spans lie at 21–36 (SVHIMHTALVAGWAGS), 101–115 (IVFSGLCFLAAIWHW), 140–156 (GIHLFLSGVACFGFGAF), 203–218 (IAAGTLGILAGLFHLS), 237–252 (VLSSSIAAVFFAAFVV), and 457–472 (SFALLFFFGHIWHGAR).

It belongs to the PsbB/PsbC family. PsbB subfamily. As to quaternary structure, PSII is composed of 1 copy each of membrane proteins PsbA, PsbB, PsbC, PsbD, PsbE, PsbF, PsbH, PsbI, PsbJ, PsbK, PsbL, PsbM, PsbT, PsbX, PsbY, PsbZ, Psb30/Ycf12, at least 3 peripheral proteins of the oxygen-evolving complex and a large number of cofactors. It forms dimeric complexes. Requires Binds multiple chlorophylls. PSII binds additional chlorophylls, carotenoids and specific lipids. as cofactor.

It is found in the plastid. The protein localises to the chloroplast thylakoid membrane. Its function is as follows. One of the components of the core complex of photosystem II (PSII). It binds chlorophyll and helps catalyze the primary light-induced photochemical processes of PSII. PSII is a light-driven water:plastoquinone oxidoreductase, using light energy to abstract electrons from H(2)O, generating O(2) and a proton gradient subsequently used for ATP formation. The polypeptide is Photosystem II CP47 reaction center protein (Morus indica (Mulberry)).